The primary structure comprises 277 residues: Bifunctional protein FolD (277 aa).

NADP(+) contacts are provided by residues 164–166 (GRS), S189, and T230.

Belongs to the tetrahydrofolate dehydrogenase/cyclohydrolase family. As to quaternary structure, homodimer.

It catalyses the reaction (6R)-5,10-methylene-5,6,7,8-tetrahydrofolate + NADP(+) = (6R)-5,10-methenyltetrahydrofolate + NADPH. It carries out the reaction (6R)-5,10-methenyltetrahydrofolate + H2O = (6R)-10-formyltetrahydrofolate + H(+). It functions in the pathway one-carbon metabolism; tetrahydrofolate interconversion. Its function is as follows. Catalyzes the oxidation of 5,10-methylenetetrahydrofolate to 5,10-methenyltetrahydrofolate and then the hydrolysis of 5,10-methenyltetrahydrofolate to 10-formyltetrahydrofolate. The sequence is that of Bifunctional protein FolD from Clostridium perfringens (strain ATCC 13124 / DSM 756 / JCM 1290 / NCIMB 6125 / NCTC 8237 / Type A).